The sequence spans 465 residues: Hexokinase-4 (465 aa).

Residues 10 to 454 (ATKKEKVEQI…SGRGAALVSA (445 aa)) enclose the Hexokinase domain. A hexokinase small subdomain region spans residues 67-203 (EGSEVGDFLS…DFEMDVVAMV (137 aa)). 78–83 (DLGGTN) is an ATP binding site. Substrate is bound by residues 151–152 (SF), 168–169 (TK), and 204–205 (ND). The segment at 204-443 (NDTVATMISC…CEITFIESEE (240 aa)) is hexokinase large subdomain. An ATP-binding site is contributed by threonine 228. The substrate site is built by asparagine 231, glutamate 256, and glutamate 290. Residues 295-296 (GK), 332-336 (TRFVS), and 411-415 (SVYKL) contribute to the ATP site.

This sequence belongs to the hexokinase family. In terms of assembly, monomer. Interacts with MIDN; the interaction occurs preferentially at low glucose levels and results in inhibition of hexokinase activity. Interacts with GCKR; leading to sequestration in the nucleus.

It localises to the cytoplasm. It is found in the nucleus. The protein localises to the mitochondrion. It catalyses the reaction a D-hexose + ATP = a D-hexose 6-phosphate + ADP + H(+). The catalysed reaction is D-fructose + ATP = D-fructose 6-phosphate + ADP + H(+). The enzyme catalyses D-glucose + ATP = D-glucose 6-phosphate + ADP + H(+). It carries out the reaction D-mannose + ATP = D-mannose 6-phosphate + ADP + H(+). It participates in carbohydrate metabolism; hexose metabolism. Its pathway is carbohydrate degradation; glycolysis; D-glyceraldehyde 3-phosphate and glycerone phosphate from D-glucose: step 1/4. With respect to regulation, subject to allosteric regulation. Low glucose and high fructose-6-phosphate triggers association with the inhibitor GCKR followed by sequestration in the nucleus. In terms of biological role, catalyzes the phosphorylation of hexose, such as D-glucose, D-fructose and D-mannose, to hexose 6-phosphate (D-glucose 6-phosphate, D-fructose 6-phosphate and D-mannose 6-phosphate, respectively). Compared to other hexokinases, has a weak affinity for D-glucose, and is effective only when glucose is abundant. Mainly expressed in pancreatic beta cells and the liver and constitutes a rate-limiting step in glucose metabolism in these tissues. Since insulin secretion parallels glucose metabolism and the low glucose affinity of GCK ensures that it can change its enzymatic activity within the physiological range of glucose concentrations, GCK acts as a glucose sensor in the pancreatic beta cell. In pancreas, plays an important role in modulating insulin secretion. In liver, helps to facilitate the uptake and conversion of glucose by acting as an insulin-sensitive determinant of hepatic glucose usage. Required to provide D-glucose 6-phosphate for the synthesis of glycogen. Mediates the initial step of glycolysis by catalyzing phosphorylation of D-glucose to D-glucose 6-phosphate. The sequence is that of Hexokinase-4 from Mus musculus (Mouse).